A 754-amino-acid polypeptide reads, in one-letter code: MKNSIISYPRIGANRELKFAIEKYFKNQSSKEELLKSAKDLRIRHWQEIQKAGIDFIPSNDFSLYDNVLDAAVLFNIVHTKYKNLNLDALDEYFAQSRGYQGENGDVTALAMKKWFNTNYHYLVPECDNADIIALTGDKIFKEYLEAKELGIESKPVLIGIFTLFKLIAFKDEKTQKLAKEKLLNAYIELFDKLNELKVTWLELDEPYLVYDLSKEDIALFEEFYQELLNHKKDLKILLQSYFGDLRDIYPKLLESKFDALGLDFIEGKQSLALVQQYGFAKDKILFGGLINGKNIYANDYAKSLKLIKELQKYTQNIILNTSCSLLHVPYSTEFESKLDSSYLKLFAFAKEKLQELKDLKEILNSSEENPLFRANQELFKNIPERLDEKVKARLKALKKEDFTRTPSFKERALIQKEFLKLPLLPTTTIGSFPQSADVRSNRLAFKQEKISAQNYTEFNQQKIKECIQIQEEIGLDVLVHGEFERNDMVEYFGENLKGFLFTQNGWVQSYGTRCVKPPVIWGDVSRTKPITLAWSKFAQSLSQKIVKGMLTGPVTILNWSFPREDISLKESTEQIALAIRDEVLDLENAGIKIIQIDEAALREKLPLRKSDWHSEYLDWAIPAFNLVHSGVKAKTQIHTHMCYSEFSDILKEIDAMDADVISFEASRSNLSLLDTLKAIRFKTEVGPGVYDIHSPRVPSVEELSLTIEKILNKLPKEQIWINPDCGLKTRAYEEVITSLKNLVTATQKIREQL.

Residues 15–18 (RELK) and Lys114 contribute to the 5-methyltetrahydropteroyltri-L-glutamate site. L-homocysteine-binding positions include 430-432 (IGS) and Glu483. L-methionine is bound by residues 430 to 432 (IGS) and Glu483. Residues 514–515 (RC) and Trp560 each bind 5-methyltetrahydropteroyltri-L-glutamate. L-homocysteine is bound at residue Asp598. L-methionine is bound at residue Asp598. Residue Glu604 coordinates 5-methyltetrahydropteroyltri-L-glutamate. The Zn(2+) site is built by His641, Cys643, and Glu665. Catalysis depends on His694, which acts as the Proton donor. Cys726 provides a ligand contact to Zn(2+).

The protein belongs to the vitamin-B12 independent methionine synthase family. Zn(2+) is required as a cofactor.

The catalysed reaction is 5-methyltetrahydropteroyltri-L-glutamate + L-homocysteine = tetrahydropteroyltri-L-glutamate + L-methionine. It functions in the pathway amino-acid biosynthesis; L-methionine biosynthesis via de novo pathway; L-methionine from L-homocysteine (MetE route): step 1/1. Catalyzes the transfer of a methyl group from 5-methyltetrahydrofolate to homocysteine resulting in methionine formation. This chain is 5-methyltetrahydropteroyltriglutamate--homocysteine methyltransferase, found in Campylobacter jejuni subsp. jejuni serotype O:2 (strain ATCC 700819 / NCTC 11168).